Reading from the N-terminus, the 141-residue chain is Hemoglobin subunit alpha (141 aa).

Positions 1–141 constitute a Globin domain; that stretch reads VLSPADKTNV…VSTVLTSKYR (141 aa). The residue at position 3 (S3) is a Phosphoserine. Residue K7 is modified to N6-succinyllysine. Residue T8 is modified to Phosphothreonine. K11 is subject to N6-succinyllysine. K16 is subject to N6-acetyllysine; alternate. The residue at position 16 (K16) is an N6-succinyllysine; alternate. Y24 is modified (phosphotyrosine). An N6-succinyllysine modification is found at K40. H58 contributes to the O2 binding site. H87 contributes to the heme b binding site. The residue at position 102 (S102) is a Phosphoserine. The residue at position 108 (T108) is a Phosphothreonine. Phosphoserine is present on residues S124 and S131. Phosphothreonine occurs at positions 134 and 137. The residue at position 138 (S138) is a Phosphoserine.

It belongs to the globin family. Heterotetramer of two alpha chains and two beta chains. Red blood cells.

Involved in oxygen transport from the lung to the various peripheral tissues. Its function is as follows. Hemopressin acts as an antagonist peptide of the cannabinoid receptor CNR1. Hemopressin-binding efficiently blocks cannabinoid receptor CNR1 and subsequent signaling. This is Hemoglobin subunit alpha (HBA) from Tursiops truncatus (Atlantic bottle-nosed dolphin).